An 807-amino-acid polypeptide reads, in one-letter code: Lysyl oxidase homolog 3B (807 aa).

Residues Met-1 to Ala-24 form the signal peptide. 5 consecutive SRCR domains span residues Phe-49–Lys-150, Val-175–Val-288, Thr-309–Asn-409, Val-419–Ala-470, and Val-476–Ser-579. 9 disulfide bridges follow: Cys-75–Cys-139, Cys-88–Cys-149, Cys-119–Cys-129, Cys-207–Cys-277, Cys-220–Cys-287, Cys-254–Cys-264, Cys-334–Cys-398, Cys-347–Cys-408, and Cys-378–Cys-388. Asn-272 carries an N-linked (GlcNAc...) asparagine glycan. An N-linked (GlcNAc...) asparagine glycan is attached at Asn-392. 2 disulfide bridges follow: Cys-514–Cys-578 and Cys-547–Cys-557. Asn-536 carries an N-linked (GlcNAc...) asparagine glycan. The N-linked (GlcNAc...) asparagine glycan is linked to Asn-679. Positions Lys-688–Tyr-724 form a cross-link, lysine tyrosylquinone (Lys-Tyr). At Tyr-724 the chain carries 2',4',5'-topaquinone.

The protein belongs to the lysyl oxidase family. The cofactor is Cu cation. Lysine tyrosylquinone residue serves as cofactor. In terms of processing, the lysine tyrosylquinone cross-link (LTQ) is generated by condensation of the epsilon-amino group of a lysine with a topaquinone produced by oxidation of tyrosine.

The protein localises to the secreted. It is found in the extracellular space. Its subcellular location is the cytoplasm. It localises to the nucleus. It catalyses the reaction L-lysyl-[protein] + O2 + H2O = (S)-2-amino-6-oxohexanoyl-[protein] + H2O2 + NH4(+). It carries out the reaction N(6)-acetyl-L-lysyl-[protein] + O2 + H2O = acetamide + (S)-2-amino-6-oxohexanoyl-[protein] + H2O2. Protein-lysine 6-oxidase that mediates the oxidation of peptidyl lysine residues to allysine in target proteins. Catalyzes the post-translational oxidative deamination of peptidyl lysine residues in precursors of elastin and different types of collagens, a prerequisite in the formation of cross-links between collagens and elastin. Can mediate oxidation of lysine residues that are acetylated. Also able to catalyze deacetylation of lysine residues. Required for maturation of neural crest derived cartilage elements. In Danio rerio (Zebrafish), this protein is Lysyl oxidase homolog 3B.